Consider the following 304-residue polypeptide: Non-specific ribonucleoside hydrolase RihC (304 aa).

Histidine 235 is an active-site residue.

It belongs to the IUNH family. RihC subfamily.

Functionally, hydrolyzes both purine and pyrimidine ribonucleosides with a broad-substrate specificity. The sequence is that of Non-specific ribonucleoside hydrolase RihC from Salmonella paratyphi A (strain ATCC 9150 / SARB42).